Here is a 257-residue protein sequence, read N- to C-terminus: Adenylate kinase (257 aa).

52 to 57 (GAGKGT) serves as a coordination point for ATP. Residues 72–101 (ATGDMLRSQVAKKTELGKEAKKIMDQGGLV) are NMP. Residues Thr73, Arg78, 99 to 101 (GLV), 128 to 131 (GFPR), and Gln135 contribute to the AMP site. The interval 169–206 (GRLVHPASGRSYHKIFNPPKNDMKDDVTGEPLIQRSDD) is LID. Residues Arg170 and 179-180 (SY) contribute to the ATP site. AMP-binding residues include Arg203 and Arg214. Gln242 provides a ligand contact to ATP.

It belongs to the adenylate kinase family. AK2 subfamily. As to quaternary structure, monomer.

The protein localises to the cytoplasm. The protein resides in the cytosol. Its subcellular location is the mitochondrion intermembrane space. It carries out the reaction AMP + ATP = 2 ADP. In terms of biological role, catalyzes the reversible transfer of the terminal phosphate group between ATP and AMP. Plays an important role in cellular energy homeostasis and in adenine nucleotide metabolism. Adenylate kinase activity is critical for regulation of the phosphate utilization and the AMP de novo biosynthesis pathways. The sequence is that of Adenylate kinase (adk1) from Neosartorya fischeri (strain ATCC 1020 / DSM 3700 / CBS 544.65 / FGSC A1164 / JCM 1740 / NRRL 181 / WB 181) (Aspergillus fischerianus).